We begin with the raw amino-acid sequence, 347 residues long: MEESMEEEEMLTYEAMMDDQNHNNWEAAVDSFRQPPPAPPLPPPPPPRPSSSIPDPGRELPGGQLLAVHAGSMDRKGLKEGLPMGSPPLSEPNGVIMMLKSCDAAAAVAKAAPAPTPSSTININTSTSKFLMNVITIEDYKSTYWPKLDGAIDQLLTQSPGDYIPISYEQIYSCVYKCVCQQHSEQMYSDLIKKITSHLERVSKELQASPPDLYIERFNIALGQYMGALQSIVPLFIYMNKFYIETKLNRDLKDDLIKLFTEHVAEKHIYSLMQWVQMAPTLFSKFIPNILPPAVESELSEYAAQDQKLQRELIQNGFTRGDQSRKRAGDELAYNSPSACASSRGYR.

The segment covering 1 to 11 (MEESMEEEEML) has biased composition (acidic residues). 2 disordered regions span residues 1–63 (MEES…LPGG) and 320–347 (RGDQ…RGYR). Residues 34 to 49 (QPPPAPPLPPPPPPRP) show a composition bias toward pro residues.

This sequence belongs to the cullin family. As to quaternary structure, interacts with CDK2.

Cell cycle associated protein capable of promoting cell proliferation through the activation of CDK2 at the G1/S phase transition. This is CDK2-associated and cullin domain-containing protein 1 (Cacul1) from Rattus norvegicus (Rat).